Here is a 587-residue protein sequence, read N- to C-terminus: MKRSMYAGRVREEHIGQEITLKGWVGRRRDLGGLIFIDLRDREGIMQLVINPEKVSAEVMATAESLRSEFVIEVTGQVAAREQANDKLPTGAVELNVTALIVLNTAKTTPFEIKDGIEANDDTRLRYRYLDLRRPEMLENLKLRAKVTHSIRNYLDELEFIDVETPFLSKSTPEGARDYLVPSRVNKGHFYALPQSPQITKQLLMNAGFDRYYQIVKCFRDEDLRGDRQPEFTQVDLETSFLTEQEIQDITESLIARVMKETKGIEVTLPFPRMKYDDAMALYGSDKPDTRFDMLLQDLTEVVRGVDFKVFSEAPAVKAIVVTGAADNYSRKDIDKMTEVAKQYGAKGLAWVKVVDGELNGPVAKFLTGIQEELTTALVLEDKDLVLFVADTLEVANATLGALRGRIAKELGLIDNDKFNFLWVVDWPMFEWSEEEGRYMSAHHPFTLPQEETAHELEGDLAKVRAIAYDIVLNGYELGGGSLRINQKDLQERMFKALGFSTEEANDQFGFLLEAMDYGFPPHGGLAIGLDRFVMLLAGEENIREVIAFPKNNKATDPMTQAPSTVALKQLEELSLQVEEDETNKTN.

Residue glutamate 174 coordinates L-aspartate. Positions 198–201 are aspartate; sequence QITK. L-aspartate is bound at residue arginine 220. Residues 220–222 and glutamine 229 each bind ATP; that span reads RDE. Position 443 (histidine 443) interacts with L-aspartate. Glutamate 477 is a binding site for ATP. Residue arginine 484 participates in L-aspartate binding. An ATP-binding site is contributed by 529 to 532; that stretch reads GLDR.

The protein belongs to the class-II aminoacyl-tRNA synthetase family. Type 1 subfamily. As to quaternary structure, homodimer.

The protein resides in the cytoplasm. It carries out the reaction tRNA(Asp) + L-aspartate + ATP = L-aspartyl-tRNA(Asp) + AMP + diphosphate. In terms of biological role, catalyzes the attachment of L-aspartate to tRNA(Asp) in a two-step reaction: L-aspartate is first activated by ATP to form Asp-AMP and then transferred to the acceptor end of tRNA(Asp). This Streptococcus pneumoniae serotype 4 (strain ATCC BAA-334 / TIGR4) protein is Aspartate--tRNA ligase.